The sequence spans 76 residues: Exodeoxyribonuclease 7 small subunit (76 aa).

It belongs to the XseB family. As to quaternary structure, heterooligomer composed of large and small subunits.

It localises to the cytoplasm. It catalyses the reaction Exonucleolytic cleavage in either 5'- to 3'- or 3'- to 5'-direction to yield nucleoside 5'-phosphates.. Bidirectionally degrades single-stranded DNA into large acid-insoluble oligonucleotides, which are then degraded further into small acid-soluble oligonucleotides. The chain is Exodeoxyribonuclease 7 small subunit from Methylococcus capsulatus (strain ATCC 33009 / NCIMB 11132 / Bath).